A 547-amino-acid chain; its full sequence is Alpha-humulene/(-)-(E)-beta-caryophyllene synthase (547 aa).

5 residues coordinate (2E,6E)-farnesyl diphosphate: arginine 262, aspartate 299, aspartate 303, arginine 442, and aspartate 445. Aspartate 299 and aspartate 303 together coordinate Mg(2+). The short motif at aspartate 299–aspartate 303 is the DDXXD motif element. Residues aspartate 445, aspartate 446, serine 449, and glutamate 453 each contribute to the Mg(2+) site.

The protein belongs to the terpene synthase family. Tpsa subfamily. As to quaternary structure, monomer. Requires Mg(2+) as cofactor. Mn(2+) serves as cofactor. Expressed exclusively in flowers. Expressed in the flower stigmata and also detected in the mesocarp cell layers of the silique wall.

It is found in the cytoplasm. The catalysed reaction is (2E,6E)-farnesyl diphosphate = (-)-(E)-beta-caryophyllene + diphosphate. It catalyses the reaction (2E,6E)-farnesyl diphosphate = alpha-copaene + diphosphate. It carries out the reaction (2E,6E)-farnesyl diphosphate = alpha-humulene + diphosphate. The enzyme catalyses (2E,6E)-farnesyl diphosphate = (1S,2S,4R)-beta-elemene + diphosphate. The protein operates within secondary metabolite biosynthesis; terpenoid biosynthesis. Involved in sesquiterpene (C15) biosynthesis. The major products are beta-caryophyllene and alpha-humulene. Does not convert geranyl diphosphate (GPP) to any monoterpenes. The sequence is that of Alpha-humulene/(-)-(E)-beta-caryophyllene synthase from Arabidopsis thaliana (Mouse-ear cress).